Here is a 179-residue protein sequence, read N- to C-terminus: Large ribosomal subunit protein uL5 (179 aa).

Position 3 is an N6-acetyllysine (Lys3).

The protein belongs to the universal ribosomal protein uL5 family. Part of the 50S ribosomal subunit; part of the 5S rRNA/L5/L18/L25 subcomplex. Contacts the 5S rRNA and the P site tRNA. Forms a bridge to the 30S subunit in the 70S ribosome.

This is one of the proteins that bind and probably mediate the attachment of the 5S RNA into the large ribosomal subunit, where it forms part of the central protuberance. In the 70S ribosome it contacts protein S13 of the 30S subunit (bridge B1b), connecting the 2 subunits; this bridge is implicated in subunit movement. Contacts the P site tRNA; the 5S rRNA and some of its associated proteins might help stabilize positioning of ribosome-bound tRNAs. This is Large ribosomal subunit protein uL5 from Escherichia coli O45:K1 (strain S88 / ExPEC).